The primary structure comprises 620 residues: Cryptochrome-1 (620 aa).

The Photolyase/cryptochrome alpha/beta domain maps to 3 to 132; the sequence is VNAVHWFRKG…EVIVRISHTL (130 aa). Short sequence motifs (LIR) lie at residues 50-54, 82-87, and 151-156; these read NRWRF, DVFPRL, and KRFQTL. Ser-252 is a binding site for FAD. 4 consecutive short sequence motifs (LIR) follow at residues 255-260, 271-276, 285-290, and 335-339; these read LRFGCL, DLYKKV, SLYGQL, and TGFPW. Gln-289 contacts FAD. Position 355 (His-355) interacts with FAD. The short motif at 379–384 is the LIR 8 element; the sequence is KVFEEL. 387 to 389 serves as a coordination point for FAD; sequence DAD. Short sequence motifs (LIR) lie at residues 395–400, 411–416, 430–435, 486–491, and 492–497; these read GSWMWL, HCYCPV, RRYLPV, QIYQQL, and SRYRGL. Residues 592-620 form a disordered region; that stretch reads GTGISAGKRPNPEEETQSVGPKVQRQSTN.

This sequence belongs to the DNA photolyase class-1 family. As to quaternary structure, component of the circadian core oscillator, which includes the CRY proteins, CLOCK or NPAS2, BMAL1 or BMAL2, CSNK1E, and the PER proteins. The cofactor is FAD. (6R)-5,10-methylene-5,6,7,8-tetrahydrofolate is required as a cofactor. In terms of tissue distribution, expressed in the retina. High levels found in ganglion cells of the retina.

It localises to the cytoplasm. Its subcellular location is the nucleus. Transcriptional repressor which forms a core component of the circadian clock. The circadian clock, an internal time-keeping system, regulates various physiological processes through the generation of approximately 24 hour circadian rhythms in gene expression, which are translated into rhythms in metabolism and behavior. It is derived from the Latin roots 'circa' (about) and 'diem' (day) and acts as an important regulator of a wide array of physiological functions including metabolism, sleep, body temperature, blood pressure, endocrine, immune, cardiovascular, and renal function. Consists of two major components: the central clock, residing in the suprachiasmatic nucleus (SCN) of the brain, and the peripheral clocks that are present in nearly every tissue and organ system. Both the central and peripheral clocks can be reset by environmental cues, also known as Zeitgebers (German for 'timegivers'). The predominant Zeitgeber for the central clock is light, which is sensed by retina and signals directly to the SCN. The central clock entrains the peripheral clocks through neuronal and hormonal signals, body temperature and feeding-related cues, aligning all clocks with the external light/dark cycle. Circadian rhythms allow an organism to achieve temporal homeostasis with its environment at the molecular level by regulating gene expression to create a peak of protein expression once every 24 hours to control when a particular physiological process is most active with respect to the solar day. Transcription and translation of core clock components (CLOCK, NPAS2, BMAL1, BMAL2, PER1, PER2, PER3, CRY1 and CRY2) plays a critical role in rhythm generation, whereas delays imposed by post-translational modifications (PTMs) are important for determining the period (tau) of the rhythms (tau refers to the period of a rhythm and is the length, in time, of one complete cycle). A diurnal rhythm is synchronized with the day/night cycle, while the ultradian and infradian rhythms have a period shorter and longer than 24 hours, respectively. Disruptions in the circadian rhythms contribute to the pathology of cardiovascular diseases, cancer, metabolic syndromes and aging. A transcription/translation feedback loop (TTFL) forms the core of the molecular circadian clock mechanism. Transcription factors, CLOCK or NPAS2 and BMAL1 or BMAL2, form the positive limb of the feedback loop, act in the form of a heterodimer and activate the transcription of core clock genes and clock-controlled genes (involved in key metabolic processes), harboring E-box elements (5'-CACGTG-3') within their promoters. The core clock genes: PER1/2/3 and CRY1/2 which are transcriptional repressors form the negative limb of the feedback loop and interact with the CLOCK|NPAS2-BMAL1|BMAL2 heterodimer inhibiting its activity and thereby negatively regulating their own expression. This heterodimer also activates nuclear receptors NR1D1, NR1D2, RORA, RORB and RORG, which form a second feedback loop and which activate and repress BMAL1 transcription, respectively. CRY1 and CRY2 have redundant functions but also differential and selective contributions at least in defining the pace of the SCN circadian clock and its circadian transcriptional outputs. More potent transcriptional repressor in cerebellum and liver than CRY2, though more effective in lengthening the period of the SCN oscillator. On its side, CRY2 seems to play a critical role in tuning SCN circadian period by opposing the action of CRY1. With CRY2, is dispensable for circadian rhythm generation but necessary for the development of intercellular networks for rhythm synchrony. Capable of translocating circadian clock core proteins such as PER proteins to the nucleus. Interacts with CLOCK:BMAL1 independently of PER proteins and is found at CLOCK:BMAL1-bound sites, suggesting that CRY may act as a molecular gatekeeper to maintain CLOCK:BMAL1 in a poised and repressed state until the proper time for transcriptional activation. In Sylvia borin (Garden warbler), this protein is Cryptochrome-1 (CRY1).